A 156-amino-acid polypeptide reads, in one-letter code: Small ribosomal subunit protein uS7 (156 aa).

This sequence belongs to the universal ribosomal protein uS7 family. As to quaternary structure, part of the 30S ribosomal subunit. Contacts proteins S9 and S11.

Functionally, one of the primary rRNA binding proteins, it binds directly to 16S rRNA where it nucleates assembly of the head domain of the 30S subunit. Is located at the subunit interface close to the decoding center, probably blocks exit of the E-site tRNA. This Onion yellows phytoplasma (strain OY-M) protein is Small ribosomal subunit protein uS7.